The sequence spans 360 residues: Meiotic drive suppressor wtf13 (360 aa).

Composition is skewed to polar residues over residues 1–10 (MKNNYTSLKS) and 58–70 (DSST…TNPN). Disordered regions lie at residues 1-20 (MKNN…ELKT) and 37-75 (EEEG…ERRQ). Transmembrane regions (helical) follow at residues 90–110 (LLIS…CVNP), 120–140 (AFSV…FCFF), 150–170 (CIKV…ISLA), 186–206 (DLVV…FGCV), 222–242 (SSIS…IWTL), 246–266 (LFGL…TKGL), 276–296 (ATGY…LFFY), and 310–330 (FIGN…RGIA).

Belongs to the WTF family. As to quaternary structure, homomer. Interacts with other proteins that exhibit high sequence similarity.

The protein resides in the spore membrane. The protein localises to the vacuole membrane. Its function is as follows. Acts as a suppressor component of the dual wtf meiotic drive system, and can suppress but not confer meiotic drive by compatible poisons. Wtf meiotic drive systems promote unequal transmission of alleles from the parental zygote to progeny spores by encoding a poison and an antidote from the same locus; the poison is trans-acting and forms toxic aggregates in all spores within an ascus, wherease the antidote is spore-specific and targets aggregates for degradation by the vacuole. Meiotic drive by wtf systems therefore lead to poisoning of all progeny that do not inherit the dual poison/antidote allele, or express a compatible antidote. The sequence is that of Meiotic drive suppressor wtf13 from Schizosaccharomyces kambucha (Fission yeast).